A 165-amino-acid polypeptide reads, in one-letter code: Endoribonuclease YbeY (165 aa).

Zn(2+) contacts are provided by His130, His134, and His140.

This sequence belongs to the endoribonuclease YbeY family. It depends on Zn(2+) as a cofactor.

The protein resides in the cytoplasm. Functionally, single strand-specific metallo-endoribonuclease involved in late-stage 70S ribosome quality control and in maturation of the 3' terminus of the 16S rRNA. The chain is Endoribonuclease YbeY from Streptococcus pneumoniae serotype 4 (strain ATCC BAA-334 / TIGR4).